We begin with the raw amino-acid sequence, 147 residues long: DNA base-flipping protein (147 aa).

Belongs to the MGMT family. ATL subfamily. As to quaternary structure, interacts with several proteins, including UvrA, UvrD and the three subunits of the RNA polymerase.

Its function is as follows. Involved in DNA damage recognition. Binds DNA containing O(6)-methylguanine and larger O(6)-alkylguanine adducts. Binds to the damaged base and flips the base out of the DNA duplex into an extrahelical conformation, which allows processing by repair proteins. Also affects the regulation of gene expression in response to alkylation. The chain is DNA base-flipping protein from Thermus thermophilus (strain ATCC 27634 / DSM 579 / HB8).